Consider the following 276-residue polypeptide: Urease accessory protein UreD (276 aa).

It belongs to the UreD family. In terms of assembly, ureD, UreF and UreG form a complex that acts as a GTP-hydrolysis-dependent molecular chaperone, activating the urease apoprotein by helping to assemble the nickel containing metallocenter of UreC. The UreE protein probably delivers the nickel.

It localises to the cytoplasm. Required for maturation of urease via the functional incorporation of the urease nickel metallocenter. In Albidiferax ferrireducens (strain ATCC BAA-621 / DSM 15236 / T118) (Rhodoferax ferrireducens), this protein is Urease accessory protein UreD.